We begin with the raw amino-acid sequence, 445 residues long: Dolichyl-diphosphooligosaccharide--protein glycosyltransferase 48 kDa subunit (445 aa).

The first 32 residues, 1 to 32, serve as a signal peptide directing secretion; the sequence is MRRRRKMEAGAAARAWSLLWLLLPLLGPVCAS. Topologically, residues 33-415 are lumenal; the sequence is GPRTLVLLDN…QYERFIPSAY (383 aa). Residues 416–436 form a helical membrane-spanning segment; it reads PYYASAFSMMLGLFIFSTVFL. Over 437–445 the chain is Cytoplasmic; sequence HMKEKEKSD.

It belongs to the DDOST 48 kDa subunit family. As to quaternary structure, component of the oligosaccharyltransferase (OST) complex. OST exists in two different complex forms which contain common core subunits RPN1, RPN2, OST48, OST4, DAD1 and TMEM258, either STT3A or STT3B as catalytic subunits, and form-specific accessory subunits. STT3A complex assembly occurs through the formation of 3 subcomplexes. Subcomplex 1 contains RPN1 and TMEM258, subcomplex 2 contains the STT3A-specific subunits STT3A, DC2/OSTC, and KCP2 as well as the core subunit OST4, and subcomplex 3 contains RPN2, DAD1, and OST48. The STT3A complex can form stable complexes with the Sec61 complex or with both the Sec61 and TRAP complexes. Interacts with SMIM22.

Its subcellular location is the endoplasmic reticulum. The protein resides in the endoplasmic reticulum membrane. The protein operates within protein modification; protein glycosylation. In terms of biological role, subunit of the oligosaccharyl transferase (OST) complex that catalyzes the initial transfer of a defined glycan (Glc(3)Man(9)GlcNAc(2) in eukaryotes) from the lipid carrier dolichol-pyrophosphate to an asparagine residue within an Asn-X-Ser/Thr consensus motif in nascent polypeptide chains, the first step in protein N-glycosylation. N-glycosylation occurs cotranslationally and the complex associates with the Sec61 complex at the channel-forming translocon complex that mediates protein translocation across the endoplasmic reticulum (ER). All subunits are required for a maximal enzyme activity. Required for the assembly of both SST3A- and SS3B-containing OST complexes. The polypeptide is Dolichyl-diphosphooligosaccharide--protein glycosyltransferase 48 kDa subunit (Canis lupus familiaris (Dog)).